We begin with the raw amino-acid sequence, 288 residues long: ATP phosphoribosyltransferase (288 aa).

This sequence belongs to the ATP phosphoribosyltransferase family. Long subfamily. The cofactor is Mg(2+).

Its subcellular location is the cytoplasm. The enzyme catalyses 1-(5-phospho-beta-D-ribosyl)-ATP + diphosphate = 5-phospho-alpha-D-ribose 1-diphosphate + ATP. The protein operates within amino-acid biosynthesis; L-histidine biosynthesis; L-histidine from 5-phospho-alpha-D-ribose 1-diphosphate: step 1/9. With respect to regulation, feedback inhibited by histidine. In terms of biological role, catalyzes the condensation of ATP and 5-phosphoribose 1-diphosphate to form N'-(5'-phosphoribosyl)-ATP (PR-ATP). Has a crucial role in the pathway because the rate of histidine biosynthesis seems to be controlled primarily by regulation of HisG enzymatic activity. The chain is ATP phosphoribosyltransferase from Methanococcus maripaludis (strain C6 / ATCC BAA-1332).